The chain runs to 671 residues: Phosphoenolpyruvate carboxykinase (ATP) 1 (671 aa).

A compositionally biased stretch (low complexity) spans 1 to 10 (MSAGNGNATN). Positions 1–44 (MSAGNGNATNGDGGFSFPKGPVMPKITTGAAKRGSGVCHDDSGP) are disordered. Ser-2 carries the N-acetylserine modification. A Phosphoserine modification is found at Ser-62. Position 66 is a phosphothreonine (Thr-66). Residues 100–127 (TRESGPKVVRGDPAEKKTDGSTTPAYAH) form a disordered region. The span at 108–118 (VRGDPAEKKTD) shows a compositional bias: basic and acidic residues. Residue Arg-189 coordinates substrate. Ca(2+)-binding residues include His-270 and Asn-271. Residues Tyr-328 and Lys-334 each coordinate substrate. ATP contacts are provided by residues Lys-334, His-353, and 369–377 (GLSGTGKTT). Mn(2+) contacts are provided by Lys-334 and His-353. Asp-390 lines the Mn(2+) pocket. Residue Gly-404 coordinates Ca(2+). Residues Glu-418, Arg-455, 574 to 575 (RI), Ile-575, and Thr-580 each bind ATP. Arg-455 serves as a coordination point for substrate.

It belongs to the phosphoenolpyruvate carboxykinase (ATP) family. In terms of assembly, monomer. Mn(2+) serves as cofactor. As to expression, expressed in cotyledons, flowers, siliques, seeds, leaves, stems and roots. Localized in mid-veins.

Its subcellular location is the cytoplasm. It carries out the reaction oxaloacetate + ATP = phosphoenolpyruvate + ADP + CO2. It functions in the pathway carbohydrate biosynthesis; gluconeogenesis. Its activity is regulated as follows. Allosterically activated by calcium. It may represent the only case of a monomeric, allosteric enzyme. Involved in the gluconeogenesis. Catalyzes the conversion of oxaloacetate (OAA) to phosphoenolpyruvate (PEP) through direct phosphoryl transfer between the nucleoside triphosphate and OAA. The polypeptide is Phosphoenolpyruvate carboxykinase (ATP) 1 (Arabidopsis thaliana (Mouse-ear cress)).